Here is a 332-residue protein sequence, read N- to C-terminus: Autoinducer 2 import system permease protein LsrD (332 aa).

10 consecutive transmembrane segments (helical) span residues 7–27 (YSWE…FGVI), 45–65 (ICIG…GMDI), 70–90 (TIGL…PLPL), 91–111 (AIII…GLII), 118–138 (LVIT…LSGM), 162–182 (FLGI…FWLL), 216–236 (VYAM…SYFG), 240–260 (SDLG…GGAN), 261–281 (IYGG…VGFL), and 288–308 (AGVP…VVVV).

This sequence belongs to the binding-protein-dependent transport system permease family. AraH/RbsC subfamily. As to quaternary structure, the complex is composed of two ATP-binding proteins (LsrA), two transmembrane proteins (LsrC and LsrD) and a solute-binding protein (LsrB).

It is found in the cell inner membrane. Part of the ABC transporter complex LsrABCD involved in autoinducer 2 (AI-2) import. Probably responsible for the translocation of the substrate across the membrane. This chain is Autoinducer 2 import system permease protein LsrD (lsrD), found in Salmonella paratyphi A (strain ATCC 9150 / SARB42).